A 151-amino-acid polypeptide reads, in one-letter code: MNSIKVKIAYVRKDKAPKLPQYATPGAAGVDLQASLDQELTIEPGQIVKIPTGLAIELPHAGVGAFVFARSGLASKYGLALANGVGVIDSDYRGEILVAVINQGSEPFVVKDGDRIAQMVFLPVFIGEFYLADQLDETGRGCGGFGSTGVS.

Substrate contacts are provided by residues 70-72 (RSG), N83, and 87-89 (VID).

The protein belongs to the dUTPase family. Mg(2+) is required as a cofactor.

The catalysed reaction is dUTP + H2O = dUMP + diphosphate + H(+). The protein operates within pyrimidine metabolism; dUMP biosynthesis; dUMP from dCTP (dUTP route): step 2/2. Functionally, this enzyme is involved in nucleotide metabolism: it produces dUMP, the immediate precursor of thymidine nucleotides and it decreases the intracellular concentration of dUTP so that uracil cannot be incorporated into DNA. The sequence is that of Deoxyuridine 5'-triphosphate nucleotidohydrolase from Desulfitobacterium hafniense (strain DSM 10664 / DCB-2).